A 171-amino-acid polypeptide reads, in one-letter code: MLRLLEEKIATPLGPLWVICDEQFRLRAVEWEEYSERMVQLLDIHYRKEGYERISATNPGGLSDKLREYFAGNLSIIDTLPTATGGTPFQREVWKTLRTIPCGQVMHYGQLAEQLGRPGAARAVGAANGSNPISIVVPCHRVIGRNGTMTGYAGGVQRKEWLLRHEGYLLL.

The active-site Nucleophile; methyl group acceptor is Cys-139.

Belongs to the MGMT family.

The protein resides in the cytoplasm. The enzyme catalyses a 6-O-methyl-2'-deoxyguanosine in DNA + L-cysteinyl-[protein] = S-methyl-L-cysteinyl-[protein] + a 2'-deoxyguanosine in DNA. It catalyses the reaction a 4-O-methyl-thymidine in DNA + L-cysteinyl-[protein] = a thymidine in DNA + S-methyl-L-cysteinyl-[protein]. Involved in the cellular defense against the biological effects of O6-methylguanine (O6-MeG) and O4-methylthymine (O4-MeT) in DNA. Repairs the methylated nucleobase in DNA by stoichiometrically transferring the methyl group to a cysteine residue in the enzyme. This is a suicide reaction: the enzyme is irreversibly inactivated. The polypeptide is Methylated-DNA--protein-cysteine methyltransferase (Shigella flexneri).